We begin with the raw amino-acid sequence, 206 residues long: Small ribosomal subunit protein uS4A (206 aa).

The region spanning 98-164 (MRLDNVVYRL…EKFKTFAENP (67 aa)) is the S4 RNA-binding domain.

It belongs to the universal ribosomal protein uS4 family. As to quaternary structure, part of the 30S ribosomal subunit. Contacts protein S5. The interaction surface between S4 and S5 is involved in control of translational fidelity.

Its function is as follows. One of the primary rRNA binding proteins, it binds directly to 16S rRNA where it nucleates assembly of the body of the 30S subunit. With S5 and S12 plays an important role in translational accuracy. The chain is Small ribosomal subunit protein uS4A from Clostridium botulinum (strain ATCC 19397 / Type A).